The following is a 252-amino-acid chain: 5-oxoprolinase subunit A (252 aa).

Belongs to the LamB/PxpA family. As to quaternary structure, forms a complex composed of PxpA, PxpB and PxpC.

It catalyses the reaction 5-oxo-L-proline + ATP + 2 H2O = L-glutamate + ADP + phosphate + H(+). Functionally, catalyzes the cleavage of 5-oxoproline to form L-glutamate coupled to the hydrolysis of ATP to ADP and inorganic phosphate. The protein is 5-oxoprolinase subunit A of Corynebacterium glutamicum (strain R).